The chain runs to 433 residues: Glutamate-1-semialdehyde 2,1-aminomutase (433 aa).

K265 bears the N6-(pyridoxal phosphate)lysine mark.

This sequence belongs to the class-III pyridoxal-phosphate-dependent aminotransferase family. HemL subfamily. Homodimer. Pyridoxal 5'-phosphate is required as a cofactor.

The protein resides in the cytoplasm. It carries out the reaction (S)-4-amino-5-oxopentanoate = 5-aminolevulinate. Its pathway is porphyrin-containing compound metabolism; protoporphyrin-IX biosynthesis; 5-aminolevulinate from L-glutamyl-tRNA(Glu): step 2/2. This Shewanella denitrificans (strain OS217 / ATCC BAA-1090 / DSM 15013) protein is Glutamate-1-semialdehyde 2,1-aminomutase.